The chain runs to 195 residues: Glycerol-3-phosphate acyltransferase (195 aa).

4 consecutive transmembrane segments (helical) span residues 2–22 (INLL…SFIV), 79–99 (AALM…LLGF), 111–131 (VALI…VVIL), and 146–166 (TILP…GLVL).

Belongs to the PlsY family. As to quaternary structure, probably interacts with PlsX.

The protein resides in the cell membrane. The enzyme catalyses an acyl phosphate + sn-glycerol 3-phosphate = a 1-acyl-sn-glycero-3-phosphate + phosphate. The protein operates within lipid metabolism; phospholipid metabolism. Its function is as follows. Catalyzes the transfer of an acyl group from acyl-phosphate (acyl-PO(4)) to glycerol-3-phosphate (G3P) to form lysophosphatidic acid (LPA). This enzyme utilizes acyl-phosphate as fatty acyl donor, but not acyl-CoA or acyl-ACP. The chain is Glycerol-3-phosphate acyltransferase from Alkaliphilus metalliredigens (strain QYMF).